Consider the following 203-residue polypeptide: MAEVQVLVLDGRGHLLGRLAAIVAKQVLLGRKVVVVRCEGINISGNFYRNKLKYLAFLRKRMNTNPSRGPYHFRAPSRIFWRTVRGMLPHKTKRGQAALDRLKVFDGIPPPYDKKKRMVVPAALKVVRLKPTRKFAYLGRLAHEVGWKYQAVTATLEEKRKEKAKIHYRKKKQLMRLRKQAEKNVEKKIDKYTEVLKTHGLLV.

N-acetylalanine is present on Ala-2. Arg-59 bears the Citrulline mark. Ser-77 is subject to Phosphoserine; by ZIPK/DAPK3. Arg-140 is modified (citrulline). Position 191 is an N6-acetyllysine (Lys-191).

It belongs to the universal ribosomal protein uL13 family. Component of the 60S ribosome. Component of the GAIT complex. Interacts with EIF4G1. In terms of processing, phosphorylation at Ser-77 upon interferon-gamma treatment in monocytes involves a DAPK1-DAPK3 kinase cascade and is causing release from the ribosome, association with the GAIT complex and subsequent involvement in transcript-selective translation inhibition. Citrullinated by PADI4.

It is found in the cytoplasm. Functionally, associated with ribosomes but is not required for canonical ribosome function and has extra-ribosomal functions. Component of the GAIT (gamma interferon-activated inhibitor of translation) complex which mediates interferon-gamma-induced transcript-selective translation inhibition in inflammation processes. Upon interferon-gamma activation and subsequent phosphorylation dissociates from the ribosome and assembles into the GAIT complex which binds to stem loop-containing GAIT elements in the 3'-UTR of diverse inflammatory mRNAs (such as ceruplasmin) and suppresses their translation. In the GAIT complex interacts with m7G cap-bound eIF4G at or near the eIF3-binding site and blocks the recruitment of the 43S ribosomal complex. Involved in methylation of rRNA. The sequence is that of Large ribosomal subunit protein uL13 (RPL13A) from Homo sapiens (Human).